Consider the following 189-residue polypeptide: GTP cyclohydrolase 1 (189 aa).

Zn(2+) is bound by residues Cys76, His79, and Cys149.

Belongs to the GTP cyclohydrolase I family. As to quaternary structure, toroid-shaped homodecamer, composed of two pentamers of five dimers.

The enzyme catalyses GTP + H2O = 7,8-dihydroneopterin 3'-triphosphate + formate + H(+). It functions in the pathway cofactor biosynthesis; 7,8-dihydroneopterin triphosphate biosynthesis; 7,8-dihydroneopterin triphosphate from GTP: step 1/1. The sequence is that of GTP cyclohydrolase 1 from Dehalococcoides mccartyi (strain ATCC BAA-2266 / KCTC 15142 / 195) (Dehalococcoides ethenogenes (strain 195)).